The chain runs to 282 residues: Dihydropteroate synthase (282 aa).

In terms of domain architecture, Pterin-binding spans 15 to 267; the sequence is PHVMGILNVT…DVKETVEAMR (253 aa). Asparagine 22 is a binding site for Mg(2+). (7,8-dihydropterin-6-yl)methyl diphosphate-binding positions include threonine 62, aspartate 96, asparagine 115, aspartate 185, lysine 221, and 255–257; that span reads RVH.

The protein belongs to the DHPS family. As to quaternary structure, homodimer. The cofactor is Mg(2+).

It catalyses the reaction (7,8-dihydropterin-6-yl)methyl diphosphate + 4-aminobenzoate = 7,8-dihydropteroate + diphosphate. The protein operates within cofactor biosynthesis; tetrahydrofolate biosynthesis; 7,8-dihydrofolate from 2-amino-4-hydroxy-6-hydroxymethyl-7,8-dihydropteridine diphosphate and 4-aminobenzoate: step 1/2. In terms of biological role, catalyzes the condensation of para-aminobenzoate (pABA) with 6-hydroxymethyl-7,8-dihydropterin diphosphate (DHPt-PP) to form 7,8-dihydropteroate (H2Pte), the immediate precursor of folate derivatives. This Shigella flexneri protein is Dihydropteroate synthase (folP).